Reading from the N-terminus, the 394-residue chain is Formate-dependent phosphoribosylglycinamide formyltransferase (394 aa).

Residues 22 to 23 and E82 contribute to the N(1)-(5-phospho-beta-D-ribosyl)glycinamide site; that span reads EL. Residues R114, K155, 160–165, 195–198, and E203 each bind ATP; these read SSGKGQ and EGFV. Residues 119–308 enclose the ATP-grasp domain; sequence RLAAETLKLP…EFALHVRAIL (190 aa). Mg(2+) contacts are provided by E267 and E279. N(1)-(5-phospho-beta-D-ribosyl)glycinamide is bound by residues D286, K357, and 364 to 365; that span reads RR.

It belongs to the PurK/PurT family. In terms of assembly, homodimer.

The enzyme catalyses N(1)-(5-phospho-beta-D-ribosyl)glycinamide + formate + ATP = N(2)-formyl-N(1)-(5-phospho-beta-D-ribosyl)glycinamide + ADP + phosphate + H(+). The protein operates within purine metabolism; IMP biosynthesis via de novo pathway; N(2)-formyl-N(1)-(5-phospho-D-ribosyl)glycinamide from N(1)-(5-phospho-D-ribosyl)glycinamide (formate route): step 1/1. Its function is as follows. Involved in the de novo purine biosynthesis. Catalyzes the transfer of formate to 5-phospho-ribosyl-glycinamide (GAR), producing 5-phospho-ribosyl-N-formylglycinamide (FGAR). Formate is provided by PurU via hydrolysis of 10-formyl-tetrahydrofolate. This is Formate-dependent phosphoribosylglycinamide formyltransferase from Tolumonas auensis (strain DSM 9187 / NBRC 110442 / TA 4).